Reading from the N-terminus, the 557-residue chain is MSQDENIVKAVEESAEPAQVILGEDGKPLSKKALKKLQKEQEKQRKKEERALQLEAEREAREKKAAAEDTAKDNYGKLPLIQSRDSDRTGQKRVKFVDLDEAKDSDKEVLFRARVHNTRQQGATLAFLTLRQQASLIQGLVKANKEGTISKNMVKWAGSLNLESIVLVRGIVKKVDEPIKSATVQNLEIHITKIYTISETPEALPILLEDASRSEAEAEAAGLPVVNLDTRLDYRVIDLRTVTNQAIFRIQAGVCELFREYLATKKFTEVHTPKLLGAPSEGGSSVFEVTYFKGKAYLAQSPQFNKQQLIVADFERVYEIGPVFRAENSNTHRHMTEFTGLDMEMAFEEHYHEVLDTLSELFVFIFSELPKRFAHEIELVRKQYPVEEFKLPKDGKMVRLTYKEGIEMLRAAGKEIGDFEDLSTENEKFLGKLVRDKYDTDFYILDKFPLEIRPFYTMPDPANPKYSNSYDFFMRGEEILSGAQRIHDHALLQERMKAHGLSPEDPGLKDYCDGFSYGCPPHAGGGIGLERVVMFYLDLKNIRRASLFPRDPKRLRP.

Residues 1–12 show a composition bias toward basic and acidic residues; that stretch reads MSQDENIVKAVE. The segment at 1–74 is disordered; it reads MSQDENIVKA…AAAEDTAKDN (74 aa). The residue at position 2 (S2) is an N-acetylserine. Phosphoserine is present on S14. The span at 37-74 shows a compositional bias: basic and acidic residues; the sequence is LQKEQEKQRKKEERALQLEAEREAREKKAAAEDTAKDN. Position 281 (E281) interacts with L-aspartate. The residue at position 301 (S301) is a Phosphoserine. Residues 303–306 form an aspartate region; it reads QFNK. R325 is an L-aspartate binding site. ATP contacts are provided by residues 325 to 327, 333 to 335, and E478; these read RAE and RHM. Residues S481 and R485 each contribute to the L-aspartate site. S502 is modified (phosphoserine). ATP is bound at residue 528–531; sequence GLER. S546 carries the post-translational modification Phosphoserine.

The protein belongs to the class-II aminoacyl-tRNA synthetase family. Type 2 subfamily. As to quaternary structure, homodimer.

Its subcellular location is the cytoplasm. The enzyme catalyses tRNA(Asp) + L-aspartate + ATP = L-aspartyl-tRNA(Asp) + AMP + diphosphate. This is Aspartate--tRNA ligase, cytoplasmic (DPS1) from Saccharomyces cerevisiae (strain ATCC 204508 / S288c) (Baker's yeast).